Consider the following 221-residue polypeptide: Casparian strip membrane protein 3 (221 aa).

A compositionally biased stretch (basic and acidic residues) spans 1-12; it reads MDIEKAASRREE. The interval 1-28 is disordered; sequence MDIEKAASRREEEEPIVQRPKLDKGKGK. At 1-58 the chain is on the cytoplasmic side; that stretch reads MDIEKAASRREEEEPIVQRPKLDKGKGKAHVFAPPMNYNRIMDKHKQEKVSAAGWKRG. A helical transmembrane segment spans residues 59–79; it reads VAIFDFVLRLIAAITAMAAAA. At 80 to 109 the chain is on the extracellular side; the sequence is KMATTEETLPFFTQFLQFQAEYTDLPTMSS. The chain crosses the membrane as a helical span at residues 110–130; sequence FVIVNSIVGGYLTLSLPFSIV. The Cytoplasmic segment spans residues 131–148; that stretch reads CILRPLAVPPRLFLIICD. The chain crosses the membrane as a helical span at residues 149 to 169; sequence TAMMGLTMMAASASAAIVYLA. Over 170–194 the chain is Extracellular; it reads HNGNSSSNWLPVCQQFGDFCQGTSG. The N-linked (GlcNAc...) asparagine glycan is linked to N173. Residues 195-215 form a helical membrane-spanning segment; that stretch reads AVVASFIAATLLMFLVILSAF. Topologically, residues 216–221 are cytoplasmic; sequence ALKRST.

It belongs to the Casparian strip membrane proteins (CASP) family. In terms of assembly, homodimer and heterodimers.

It localises to the cell membrane. Its function is as follows. Regulates membrane-cell wall junctions and localized cell wall deposition. Required for establishment of the Casparian strip membrane domain (CSD) and the subsequent formation of Casparian strips, a cell wall modification of the root endodermis that determines an apoplastic barrier between the intraorganismal apoplasm and the extraorganismal apoplasm and prevents lateral diffusion. The protein is Casparian strip membrane protein 3 of Arabidopsis lyrata subsp. lyrata (Lyre-leaved rock-cress).